Reading from the N-terminus, the 390-residue chain is 4-hydroxycoumarin synthase 1 (390 aa).

C161 is an active-site residue.

Belongs to the thiolase-like superfamily. Chalcone/stilbene synthases family. Homodimer.

The enzyme catalyses 2-hydroxybenzoyl-CoA + malonyl-CoA = 4-hydroxycoumarin + CO2 + 2 CoA. Its function is as follows. Type III polyketide synthase involved preferentially in the biosynthesis of 4-hydroxycoumarin from salicoyl-CoA. Can also use benzoyl-CoA and malonyl-CoA to produce 3,5-dihydroxybiphenyl as a major product and benzoyldiacetic acid lactone as a minor side product. Can also use m-hydroxybenzoyl-CoA as substrate, producing m-hydroxybenzoyl diacetic acid lactone as a derailment product. No activity with p-hydroxybenzoyl-CoA, CoA-linked cinnamic acids or acetyl-CoA. In Sorbus aucuparia (European mountain ash), this protein is 4-hydroxycoumarin synthase 1 (BIS2).